The chain runs to 266 residues: Ribosome-recycling factor, chloroplastic (266 aa).

Over residues 1–26 the composition is skewed to low complexity; that stretch reads MPPLHAVSPAAAAAPPRALSSAARVP. The interval 1-30 is disordered; that stretch reads MPPLHAVSPAAAAAPPRALSSAARVPQRPG. Residues 1 to 74 constitute a chloroplast transit peptide; sequence MPPLHAVSPA…SDKRAVLRHA (74 aa). 2 coiled-coil regions span residues 75–109 and 207–266; these read TIEEIEAEKSVIEDQARERMEKAIETVQNNFNTVR and VAIR…LMKI.

It belongs to the RRF family.

The protein resides in the plastid. It is found in the chloroplast. Functionally, responsible for the release of ribosomes from messenger RNA at the termination of chloroplastic protein biosynthesis. In Oryza sativa subsp. indica (Rice), this protein is Ribosome-recycling factor, chloroplastic.